The following is a 137-amino-acid chain: Putative pre-16S rRNA nuclease (137 aa).

This sequence belongs to the YqgF nuclease family.

It localises to the cytoplasm. Its function is as follows. Could be a nuclease involved in processing of the 5'-end of pre-16S rRNA. This is Putative pre-16S rRNA nuclease from Anaeromyxobacter sp. (strain Fw109-5).